A 544-amino-acid polypeptide reads, in one-letter code: Protein nucleotidyltransferase YdiU (544 aa).

ATP contacts are provided by G133, G135, R136, K155, D167, G168, R218, and R225. The active-site Proton acceptor is the D294. The Mg(2+) site is built by N295 and D304. D304 is a binding site for ATP.

Belongs to the SELO family. Mg(2+) serves as cofactor. It depends on Mn(2+) as a cofactor.

It catalyses the reaction L-seryl-[protein] + ATP = 3-O-(5'-adenylyl)-L-seryl-[protein] + diphosphate. The catalysed reaction is L-threonyl-[protein] + ATP = 3-O-(5'-adenylyl)-L-threonyl-[protein] + diphosphate. It carries out the reaction L-tyrosyl-[protein] + ATP = O-(5'-adenylyl)-L-tyrosyl-[protein] + diphosphate. The enzyme catalyses L-histidyl-[protein] + UTP = N(tele)-(5'-uridylyl)-L-histidyl-[protein] + diphosphate. It catalyses the reaction L-seryl-[protein] + UTP = O-(5'-uridylyl)-L-seryl-[protein] + diphosphate. The catalysed reaction is L-tyrosyl-[protein] + UTP = O-(5'-uridylyl)-L-tyrosyl-[protein] + diphosphate. In terms of biological role, nucleotidyltransferase involved in the post-translational modification of proteins. It can catalyze the addition of adenosine monophosphate (AMP) or uridine monophosphate (UMP) to a protein, resulting in modifications known as AMPylation and UMPylation. The sequence is that of Protein nucleotidyltransferase YdiU from Cupriavidus metallidurans (strain ATCC 43123 / DSM 2839 / NBRC 102507 / CH34) (Ralstonia metallidurans).